The sequence spans 299 residues: 33 kDa chaperonin (299 aa).

Intrachain disulfides connect Cys-240/Cys-242 and Cys-273/Cys-276.

The protein belongs to the HSP33 family. In terms of processing, under oxidizing conditions two disulfide bonds are formed involving the reactive cysteines. Under reducing conditions zinc is bound to the reactive cysteines and the protein is inactive.

The protein localises to the cytoplasm. Functionally, redox regulated molecular chaperone. Protects both thermally unfolding and oxidatively damaged proteins from irreversible aggregation. Plays an important role in the bacterial defense system toward oxidative stress. The polypeptide is 33 kDa chaperonin (Thermosynechococcus vestitus (strain NIES-2133 / IAM M-273 / BP-1)).